An 83-amino-acid chain; its full sequence is Large ribosomal subunit protein bL27 (83 aa).

A disordered region spans residues 1–26 (MAHKKAGGSSKNGRDSRGQRRGVKRF).

Belongs to the bacterial ribosomal protein bL27 family.

This is Large ribosomal subunit protein bL27 from Desulfosudis oleivorans (strain DSM 6200 / JCM 39069 / Hxd3) (Desulfococcus oleovorans).